The following is a 1501-amino-acid chain: Multidrug resistance protein CDR1 (1501 aa).

The segment at 1–30 is disordered; that stretch reads MSDSKMSSQDESKLEKAISQDSSSENHSIN. The Cytoplasmic segment spans residues 1-513; it reads MSDSKMSSQD…NFLRMKGDPS (513 aa). Residues 8-18 are compositionally biased toward basic and acidic residues; it reads SQDESKLEKAI. Residues 150-404 enclose the ABC transporter 1 domain; that stretch reads LATEGFRHFQ…FEKMGWKCPQ (255 aa). Residues 514–534 traverse the membrane as a helical segment; it reads IPIFSVFGQLVMGLILSSVFY. N535 is a glycosylation site (N-linked (GlcNAc...) asparagine). A run of 4 helical transmembrane segments spans residues 549-569, 598-618, 623-643, and 655-675; these read AMFF…MSLF, LPVK…MVNF, GRFF…SHLF, and GAMT…GFVI. N724 is a glycosylation site (N-linked (GlcNAc...) asparagine). Residues 765 to 785 form a helical membrane-spanning segment; sequence LGITIGFAVFFLAIYIALTEF. The Cytoplasmic segment spans residues 786 to 1195; that stretch reads NKGAMQKGEI…TIVQDWRSPG (410 aa). An ABC transporter 2 domain is found at 859 to 1103; that stretch reads FFWRDLTYQV…MINYFEKYGA (245 aa). Residue 895-902 participates in ATP binding; it reads GASGAGKT. The next 6 membrane-spanning stretches (helical) occupy residues 1196-1216, 1230-1250, 1281-1301, 1315-1335, 1356-1376, and 1467-1487; these read YIYS…FSFF, FSVF…LPYF, IPYQ…PLGL, GVLM…MGQL, MCLN…FWIF, and FGIF…FYWL.

It belongs to the ABC transporter superfamily. ABCG family. PDR (TC 3.A.1.205) subfamily.

It localises to the membrane. In terms of biological role, transporter, whose physiological function is not yet established. Confers resistance to the chemical cycloheximide. The protein is Multidrug resistance protein CDR1 (CDR1) of Candida albicans (Yeast).